The primary structure comprises 326 residues: MTGSNEFKLNQPPEDGISSVKFSPNTSQFLLVSSWDTSVRLYDVPANSMRLKYQHTGAVLDCAFYDPTHAWSGGLDHQLKMHDLNTDQENLVGTHDAPIRCVEYCPEVNVMVTGSWDQTVKLWDPRTPCNAGTFSQPEKVYTLSVSGDRLIVGTAGRRVLVWDLRNMGYVQQRRESSLKYQTRCIRAFPNKQGYVLSSIEGRVAVEYLDPSPEVQKKKYAFKCHRLKENNIEQIYPVNAISFHNIHNTFATGGSDGFVNIWDPFNKKRLCQFHRYPTSIASLAFSNDGTTLAIASSYMYEMDDTEHPEDGIFIRQVTDAETKPKST.

4 WD repeats span residues 5 to 43 (NEFK…RLYD), 46 to 83 (ANSM…KMHD), 86 to 124 (TDQE…KLWD), and 128 to 163 (PCNA…LVWD). The residue at position 179 (Lys-179) is an N6-acetyllysine. Residue Ser-211 is modified to Phosphoserine. Residue Lys-216 forms a Glycyl lysine isopeptide (Lys-Gly) (interchain with G-Cter in ubiquitin) linkage. A WD 5 repeat occupies 223-262 (CHRLKENNIEQIYPVNAISFHNIHNTFATGGSDGFVNIWD).

Belongs to the WD repeat BUB3 family. In terms of assembly, interacts with BUB1 and BUBR1. The BUB1/BUB3 complex interacts with MAD1L1. Interacts with ZNF207/BuGZ; leading to promote stability and kinetochore loading of BUB3. Poly-ADP-ribosylated by PARP1. In terms of processing, ubiquitinated by UBR5, promoting disassembly of the mitotic checkpoint complex from the APC/C complex.

It localises to the nucleus. The protein resides in the chromosome. It is found in the centromere. Its subcellular location is the kinetochore. Its function is as follows. Has a dual function in spindle-assembly checkpoint signaling and in promoting the establishment of correct kinetochore-microtubule (K-MT) attachments. Promotes the formation of stable end-on bipolar attachments. Necessary for kinetochore localization of BUB1. Regulates chromosome segregation during oocyte meiosis. The BUB1/BUB3 complex plays a role in the inhibition of anaphase-promoting complex or cyclosome (APC/C) when spindle-assembly checkpoint is activated and inhibits the ubiquitin ligase activity of APC/C by phosphorylating its activator CDC20. This complex can also phosphorylate MAD1L1. The protein is Mitotic checkpoint protein BUB3 (BUB3) of Bos taurus (Bovine).